We begin with the raw amino-acid sequence, 312 residues long: Putative ring-cleaving dioxygenase MhqO (312 aa).

2 VOC domains span residues 7–131 (GIHH…IVER) and 152–269 (GFGG…IATD). The Fe cation site is built by histidine 10, histidine 217, and glutamate 265.

The protein belongs to the extradiol ring-cleavage dioxygenase family. Fe(2+) is required as a cofactor.

It is found in the cytoplasm. In terms of biological role, putative ring-cleavage dioxygenase that may contribute to the degradation of aromatic compounds. The sequence is that of Putative ring-cleaving dioxygenase MhqO (mhqO) from Bacillus subtilis (strain 168).